The following is a 307-amino-acid chain: Dihydroorotate dehydrogenase B (NAD(+)), catalytic subunit (307 aa).

Residues serine 22 and 46-47 contribute to the FMN site; that span reads KT. Residues lysine 46, 70 to 74, and asparagine 128 contribute to the substrate site; that span reads NAVGL. Asparagine 128 contributes to the FMN binding site. The active-site Nucleophile is cysteine 131. 2 residues coordinate FMN: lysine 166 and isoleucine 192. 193–194 contacts substrate; it reads NT. Residues glycine 218, 244-245, and 266-267 each bind FMN; these read GG and GT.

Belongs to the dihydroorotate dehydrogenase family. Type 1 subfamily. In terms of assembly, heterotetramer of 2 PyrK and 2 PyrD type B subunits. FMN is required as a cofactor.

Its subcellular location is the cytoplasm. It catalyses the reaction (S)-dihydroorotate + NAD(+) = orotate + NADH + H(+). Its pathway is pyrimidine metabolism; UMP biosynthesis via de novo pathway; orotate from (S)-dihydroorotate (NAD(+) route): step 1/1. Its function is as follows. Catalyzes the conversion of dihydroorotate to orotate with NAD(+) as electron acceptor. The polypeptide is Dihydroorotate dehydrogenase B (NAD(+)), catalytic subunit (pyrD) (Desulforudis audaxviator (strain MP104C)).